We begin with the raw amino-acid sequence, 21 residues long: Putative NADH dehydrogenase subunit PS9 (21 aa).

The chain is Putative NADH dehydrogenase subunit PS9 from Pinus strobus (Eastern white pine).